Consider the following 279-residue polypeptide: Troponin T, fast skeletal muscle (279 aa).

Acidic residues predominate over residues Met1 to Glu21. The interval Met1–Lys82 is disordered. Ser2 is modified (N-acetylserine). Ser2 carries the phosphoserine modification. Composition is skewed to basic and acidic residues over residues Glu28–Asp49 and Pro70–Lys82. Ser98 is modified (phosphoserine). The span at Arg121–Lys163 shows a compositional bias: basic and acidic residues. A disordered region spans residues Arg121–Leu200. Residues Ser169, Ser176, and Ser177 each carry the phosphoserine modification. Residues Thr191 to Leu200 are compositionally biased toward basic and acidic residues. The residue at position 213 (Ser213) is a Phosphoserine. The residue at position 229 (Tyr229) is a Phosphotyrosine.

The protein belongs to the troponin T family.

In terms of biological role, troponin T is the tropomyosin-binding subunit of troponin, the thin filament regulatory complex which confers calcium-sensitivity to striated muscle actomyosin ATPase activity. This Oryctolagus cuniculus (Rabbit) protein is Troponin T, fast skeletal muscle (TNNT3).